Reading from the N-terminus, the 258-residue chain is Deoxyribose-phosphate aldolase 2 (258 aa).

The Proton donor/acceptor role is filled by Asp-102. The active-site Schiff-base intermediate with acetaldehyde is Lys-165. Catalysis depends on Lys-199, which acts as the Proton donor/acceptor.

Belongs to the DeoC/FbaB aldolase family. DeoC type 2 subfamily.

The protein localises to the cytoplasm. It catalyses the reaction 2-deoxy-D-ribose 5-phosphate = D-glyceraldehyde 3-phosphate + acetaldehyde. Its pathway is carbohydrate degradation; 2-deoxy-D-ribose 1-phosphate degradation; D-glyceraldehyde 3-phosphate and acetaldehyde from 2-deoxy-alpha-D-ribose 1-phosphate: step 2/2. In terms of biological role, catalyzes a reversible aldol reaction between acetaldehyde and D-glyceraldehyde 3-phosphate to generate 2-deoxy-D-ribose 5-phosphate. This is Deoxyribose-phosphate aldolase 2 (deoC2) from Vibrio vulnificus (strain YJ016).